The following is a 447-amino-acid chain: N-succinylarginine dihydrolase (447 aa).

Residues 19-28 (AGLSFGNEAS), N110, and 137-138 (HR) contribute to the substrate site. Residue E174 is part of the active site. Substrate is bound at residue R212. H248 is a catalytic residue. Residues D250 and N359 each contribute to the substrate site. The Nucleophile role is filled by C365.

The protein belongs to the succinylarginine dihydrolase family. Homodimer.

It catalyses the reaction N(2)-succinyl-L-arginine + 2 H2O + 2 H(+) = N(2)-succinyl-L-ornithine + 2 NH4(+) + CO2. Its pathway is amino-acid degradation; L-arginine degradation via AST pathway; L-glutamate and succinate from L-arginine: step 2/5. Functionally, catalyzes the hydrolysis of N(2)-succinylarginine into N(2)-succinylornithine, ammonia and CO(2). The chain is N-succinylarginine dihydrolase from Salmonella arizonae (strain ATCC BAA-731 / CDC346-86 / RSK2980).